Here is a 367-residue protein sequence, read N- to C-terminus: dTDP-4-amino-4,6-dideoxy-D-glucose transaminase (367 aa).

At Lys-184 the chain carries N6-(pyridoxal phosphate)lysine.

The protein belongs to the DegT/DnrJ/EryC1 family. The cofactor is pyridoxal 5'-phosphate.

The catalysed reaction is dTDP-4-amino-4,6-dideoxy-D-glucose + 2-oxoglutarate = dTDP-4-dehydro-6-deoxy-alpha-D-glucose + L-glutamate. It functions in the pathway bacterial outer membrane biogenesis; lipopolysaccharide biosynthesis. Functionally, catalyzes the conversion of dTDP-4-dehydro-6-deoxy-D-glucose (dTDP-D-Glc4O) to dTDP-4-amino-4,6-dideoxy-D-glucose (dTDP-D-Qui4N). L-glutamine can also be used as amino donor. The polypeptide is dTDP-4-amino-4,6-dideoxy-D-glucose transaminase (vioA) (Shigella dysenteriae).